The sequence spans 356 residues: MFS-type transporter tazK (356 aa).

9 helical membrane passes run 12–32 (LPFFLGYVLFVLSQIPVALGH), 42–62 (FLGGVTSSVCPAITGGWLADF), 69–89 (GVAVAIFAATTLVGPSIGAIT), 102–122 (MTAWTTMILGIVSGVAGFIIL), 178–198 (ILLSMTIYISFTFGLIYLLFV), 211–231 (GAIDGTLPLLSICAGIIVGAF), 257–277 (LHPMIVGAVSLAIGLLWFAWT), 288–308 (ILAGIPIGVGVQVILLQSLAY), and 320–340 (AISGTMIVRSLVGGTFPLFAP).

It belongs to the major facilitator superfamily. CAR1 family.

Its subcellular location is the membrane. Its function is as follows. MFS-type transporter; part of the gene cluster that mediates the biosynthesis of azaterrilone A and other azaphilones, a class of fungal metabolites characterized by a highly oxygenated pyrano-quinone bicyclic core and exhibiting a broad range of bioactivities. This Aspergillus terreus (strain NIH 2624 / FGSC A1156) protein is MFS-type transporter tazK.